Reading from the N-terminus, the 263-residue chain is Endonuclease 8 (263 aa).

Residue Pro2 is the Schiff-base intermediate with DNA of the active site. The Proton donor role is filled by Glu3. Catalysis depends on Lys53, which acts as the Proton donor; for beta-elimination activity. The DNA site is built by Gln70, Arg125, and Asn169. Residues 229-263 (KVFHRDGEPCERCGSIIEKTTLSSRPFYWCPGCQH) form an FPG-type zinc finger. Residue Arg253 is the Proton donor; for delta-elimination activity of the active site.

This sequence belongs to the FPG family. Requires Zn(2+) as cofactor.

The enzyme catalyses 2'-deoxyribonucleotide-(2'-deoxyribose 5'-phosphate)-2'-deoxyribonucleotide-DNA = a 3'-end 2'-deoxyribonucleotide-(2,3-dehydro-2,3-deoxyribose 5'-phosphate)-DNA + a 5'-end 5'-phospho-2'-deoxyribonucleoside-DNA + H(+). Involved in base excision repair of DNA damaged by oxidation or by mutagenic agents. Acts as a DNA glycosylase that recognizes and removes damaged bases. Has a preference for oxidized pyrimidines, such as thymine glycol, 5,6-dihydrouracil and 5,6-dihydrothymine. Has AP (apurinic/apyrimidinic) lyase activity and introduces nicks in the DNA strand. Cleaves the DNA backbone by beta-delta elimination to generate a single-strand break at the site of the removed base with both 3'- and 5'-phosphates. In Escherichia coli O17:K52:H18 (strain UMN026 / ExPEC), this protein is Endonuclease 8.